The chain runs to 86 residues: Small ribosomal subunit protein bS20 (86 aa).

The segment at 1–26 is disordered; sequence MANIKSAKKRAITSEKRRQHNASRRS.

This sequence belongs to the bacterial ribosomal protein bS20 family.

Functionally, binds directly to 16S ribosomal RNA. In Photobacterium profundum (strain SS9), this protein is Small ribosomal subunit protein bS20.